The chain runs to 400 residues: 3-phenylpropionate/cinnamic acid dioxygenase ferredoxin--NAD(+) reductase component (400 aa).

5 to 36 (TIIIVGGGQAAAMAAASLRQQGFTGELHLFSD) contributes to the FAD binding site. 146-174 (SVVIVGAGTIGLELAASATQRRCKVTVIE) is an NAD(+) binding site.

This sequence belongs to the bacterial ring-hydroxylating dioxygenase ferredoxin reductase family. This dioxygenase system consists of four proteins: the two subunits of the hydroxylase component (HcaE and HcaF), a ferredoxin (HcaC) and a ferredoxin reductase (HcaD). FAD is required as a cofactor.

The catalysed reaction is 2 reduced [2Fe-2S]-[ferredoxin] + NAD(+) + H(+) = 2 oxidized [2Fe-2S]-[ferredoxin] + NADH. Its pathway is aromatic compound metabolism; 3-phenylpropanoate degradation. Part of the multicomponent 3-phenylpropionate dioxygenase, that converts 3-phenylpropionic acid (PP) and cinnamic acid (CI) into 3-phenylpropionate-dihydrodiol (PP-dihydrodiol) and cinnamic acid-dihydrodiol (CI-dihydrodiol), respectively. In Escherichia coli O157:H7, this protein is 3-phenylpropionate/cinnamic acid dioxygenase ferredoxin--NAD(+) reductase component.